Consider the following 540-residue polypeptide: Glucose-6-phosphate isomerase (540 aa).

Residue Glu346 is the Proton donor of the active site. Catalysis depends on residues His377 and Lys505.

It belongs to the GPI family.

It localises to the cytoplasm. It catalyses the reaction alpha-D-glucose 6-phosphate = beta-D-fructose 6-phosphate. It participates in carbohydrate biosynthesis; gluconeogenesis. The protein operates within carbohydrate degradation; glycolysis; D-glyceraldehyde 3-phosphate and glycerone phosphate from D-glucose: step 2/4. Its function is as follows. Catalyzes the reversible isomerization of glucose-6-phosphate to fructose-6-phosphate. This is Glucose-6-phosphate isomerase from Francisella tularensis subsp. mediasiatica (strain FSC147).